The chain runs to 527 residues: Peptide chain release factor 3 (527 aa).

The tr-type G domain occupies 9–277; sequence AKRRTFAIIS…AVVDWAPRPL (269 aa). Residues 18 to 25, 86 to 90, and 140 to 143 contribute to the GTP site; these read SHPDAGKT, DTPGH, and NKLD.

It belongs to the TRAFAC class translation factor GTPase superfamily. Classic translation factor GTPase family. PrfC subfamily.

It is found in the cytoplasm. In terms of biological role, increases the formation of ribosomal termination complexes and stimulates activities of RF-1 and RF-2. It binds guanine nucleotides and has strong preference for UGA stop codons. It may interact directly with the ribosome. The stimulation of RF-1 and RF-2 is significantly reduced by GTP and GDP, but not by GMP. The sequence is that of Peptide chain release factor 3 from Pseudomonas putida (strain W619).